Consider the following 167-residue polypeptide: Large ribosomal subunit protein uL10 (167 aa).

It belongs to the universal ribosomal protein uL10 family. As to quaternary structure, part of the ribosomal stalk of the 50S ribosomal subunit. The N-terminus interacts with L11 and the large rRNA to form the base of the stalk. The C-terminus forms an elongated spine to which L12 dimers bind in a sequential fashion forming a multimeric L10(L12)X complex.

Functionally, forms part of the ribosomal stalk, playing a central role in the interaction of the ribosome with GTP-bound translation factors. This Paraburkholderia phytofirmans (strain DSM 17436 / LMG 22146 / PsJN) (Burkholderia phytofirmans) protein is Large ribosomal subunit protein uL10.